A 238-amino-acid chain; its full sequence is Ribonuclease PH (238 aa).

Phosphate is bound by residues Arg86 and 124-126 (GTR).

Belongs to the RNase PH family. As to quaternary structure, homohexameric ring arranged as a trimer of dimers.

The catalysed reaction is tRNA(n+1) + phosphate = tRNA(n) + a ribonucleoside 5'-diphosphate. Phosphorolytic 3'-5' exoribonuclease that plays an important role in tRNA 3'-end maturation. Removes nucleotide residues following the 3'-CCA terminus of tRNAs; can also add nucleotides to the ends of RNA molecules by using nucleoside diphosphates as substrates, but this may not be physiologically important. Probably plays a role in initiation of 16S rRNA degradation (leading to ribosome degradation) during starvation. In Vibrio parahaemolyticus serotype O3:K6 (strain RIMD 2210633), this protein is Ribonuclease PH.